Here is a 442-residue protein sequence, read N- to C-terminus: Septin-8 (442 aa).

Residues 1–16 (MAATDLERISNAEPEP) are compositionally biased toward basic and acidic residues. The tract at residues 1–21 (MAATDLERISNAEPEPRSLSL) is disordered. Ala2 is subject to N-acetylalanine. Residue Ser10 is modified to Phosphoserine. A Septin-type G domain is found at 41-307 (QGFSFNILCV…ELYRRCKLEE (267 aa)). Residues 51-58 (GETGIGKS) are G1 motif. GTP-binding positions include 51-58 (GETGIGKS), Gly106, 187-195 (KADTISKSE), Gly241, and Arg256. The interval 103 to 106 (DAVG) is G3 motif. A G4 motif region spans residues 186-189 (AKAD). Residues 322–407 (LQETYEAKRK…FNCRKAAMEA (86 aa)) adopt a coiled-coil conformation. The segment covering 411 to 420 (QALHATSQQP) has biased composition (polar residues). Residues 411-442 (QALHATSQQPLRKDKDKKKVGGWSSIYSVTIP) form a disordered region.

This sequence belongs to the TRAFAC class TrmE-Era-EngA-EngB-Septin-like GTPase superfamily. Septin GTPase family. Septins polymerize into heterooligomeric protein complexes that form filaments, and can associate with cellular membranes, actin filaments and microtubules. GTPase activity is required for filament formation. Interacts with SEPTIN7. Interacts with CDK14, SEPTIN4 and SEPTIN5. Interacts with VAMP2; the interaction inhibits interaction of VAMP2 with SYP. Interacts with STX1A. Expressed in cerebrum, hippocampus and cerebellum (at protein level). Expressed in heart (at protein level).

It localises to the cytoplasm. The protein resides in the cytoskeleton. It is found in the synapse. Its subcellular location is the cell projection. The protein localises to the axon. It localises to the cytoplasmic vesicle. The protein resides in the secretory vesicle. It is found in the synaptic vesicle membrane. Its subcellular location is the presynapse. Filament-forming cytoskeletal GTPase. May play a role in platelet secretion. Seems to participate in the process of SNARE complex formation in synaptic vesicles. The chain is Septin-8 from Rattus norvegicus (Rat).